The sequence spans 523 residues: Volkensin (523 aa).

Catalysis depends on residues Tyr74, Tyr113, Glu162, and Arg165. 111-113 (GGY) provides a ligand contact to AMP. Intrachain disulfides connect Cys245–Cys269 and Cys285–Cys304. A propeptide spans 251–265 (QSDSPLVIRSFVDRN) (linker peptide). Positions 270–397 (PSGETTAFIV…YAASQAWRVT (128 aa)) constitute a Ricin B-type lectin 1 domain. A carbohydrate contacts are provided by residues 287-291 (DVKVE), Gln300, Lys305, and Asn311. Cys328 and Cys343 are oxidised to a cystine. The a carbohydrate site is built by Asn358 and Asn398. Asn358 and Asn398 each carry an N-linked (GlcNAc...) asparagine glycan. Residues 400–523 (TVPTVTTIVG…HGNSNQQWFL (124 aa)) form the Ricin B-type lectin 2 domain. 2 cysteine pairs are disulfide-bonded: Cys414–Cys427 and Cys453–Cys471.

The protein in the N-terminal section; belongs to the ribosome-inactivating protein family. Type 2 RIP subfamily. Disulfide-linked dimer of A and B chains. Post-translationally, N-glycosylated. Contains mannose and galactose. As to expression, expressed in roots (at protein level). Expressed in seeds (at protein level).

It catalyses the reaction Endohydrolysis of the N-glycosidic bond at one specific adenosine on the 28S rRNA.. With respect to regulation, hemagglutinating activity is inhibited by galactose and structurally related sugars. Functionally, has N-glycosidase activity and is responsible for inhibiting protein synthesis through the catalytic inactivation of 60S ribosomal subunits by removing a specific adenine of 28S rRNA. Inhibits GTP-dependent binding of EF2 (elongation factor 2) to ribosomes. Binds to cell receptors and probably facilitates the entry into the cell of the A chain. Also acts as a galactose-specific lectin responsible for cell agglutination. The sequence is that of Volkensin from Adenia volkensii (Kilyambiti plant).